The sequence spans 227 residues: Thiamine-phosphate synthase (227 aa).

4-amino-2-methyl-5-(diphosphooxymethyl)pyrimidine is bound by residues 50–54 (QFRQK) and Asp82. Mg(2+) contacts are provided by Asp83 and Asp102. Thr121 lines the 4-amino-2-methyl-5-(diphosphooxymethyl)pyrimidine pocket. 147–149 (TTS) contacts 2-[(2R,5Z)-2-carboxy-4-methylthiazol-5(2H)-ylidene]ethyl phosphate. Lys150 is a 4-amino-2-methyl-5-(diphosphooxymethyl)pyrimidine binding site. 2-[(2R,5Z)-2-carboxy-4-methylthiazol-5(2H)-ylidene]ethyl phosphate contacts are provided by residues Gly178 and 198 to 199 (LS).

Belongs to the thiamine-phosphate synthase family. Mg(2+) is required as a cofactor.

It carries out the reaction 2-[(2R,5Z)-2-carboxy-4-methylthiazol-5(2H)-ylidene]ethyl phosphate + 4-amino-2-methyl-5-(diphosphooxymethyl)pyrimidine + 2 H(+) = thiamine phosphate + CO2 + diphosphate. It catalyses the reaction 2-(2-carboxy-4-methylthiazol-5-yl)ethyl phosphate + 4-amino-2-methyl-5-(diphosphooxymethyl)pyrimidine + 2 H(+) = thiamine phosphate + CO2 + diphosphate. The enzyme catalyses 4-methyl-5-(2-phosphooxyethyl)-thiazole + 4-amino-2-methyl-5-(diphosphooxymethyl)pyrimidine + H(+) = thiamine phosphate + diphosphate. The protein operates within cofactor biosynthesis; thiamine diphosphate biosynthesis; thiamine phosphate from 4-amino-2-methyl-5-diphosphomethylpyrimidine and 4-methyl-5-(2-phosphoethyl)-thiazole: step 1/1. Condenses 4-methyl-5-(beta-hydroxyethyl)thiazole monophosphate (THZ-P) and 2-methyl-4-amino-5-hydroxymethyl pyrimidine pyrophosphate (HMP-PP) to form thiamine monophosphate (TMP). This Salinibacter ruber (strain DSM 13855 / M31) protein is Thiamine-phosphate synthase.